The primary structure comprises 456 residues: Choline kinase (456 aa).

It belongs to the choline/ethanolamine kinase family. Monomer. It depends on Mg(2+) as a cofactor.

The protein localises to the cytoplasm. Its subcellular location is the nucleus. It carries out the reaction choline + ATP = phosphocholine + ADP + H(+). The protein operates within phospholipid metabolism; phosphatidylcholine biosynthesis; phosphocholine from choline: step 1/1. Functionally, catalyzes the committed step in the synthesis of phosphatidylcholine by the CDP-choline pathway. The sequence is that of Choline kinase from Schizosaccharomyces pombe (strain 972 / ATCC 24843) (Fission yeast).